A 546-amino-acid polypeptide reads, in one-letter code: NAD(P)H-quinone oxidoreductase chain 4 (546 aa).

Helical transmembrane passes span 24-44 (FPWL…IPFF), 56-76 (FALS…INGF), 106-126 (ISMP…LAAW), 132-152 (PKLF…VFAV), 156-176 (LLFF…LAIW), 188-208 (FIIY…AMGF), 232-252 (ILCY…VPLH), 263-283 (TAPV…YALL), 297-317 (FAPL…LTSF), 326-346 (IAYS…SFSS), 352-372 (AMLQ…LVGA), 396-416 (FALW…SGFV), 437-457 (VVMA…LLSM), and 484-504 (VYII…PRLV).

It belongs to the complex I subunit 4 family.

It is found in the cellular thylakoid membrane. It catalyses the reaction a plastoquinone + NADH + (n+1) H(+)(in) = a plastoquinol + NAD(+) + n H(+)(out). The enzyme catalyses a plastoquinone + NADPH + (n+1) H(+)(in) = a plastoquinol + NADP(+) + n H(+)(out). In terms of biological role, NDH-1 shuttles electrons from NAD(P)H, via FMN and iron-sulfur (Fe-S) centers, to quinones in the respiratory chain. The immediate electron acceptor for the enzyme in this species is believed to be plastoquinone. Couples the redox reaction to proton translocation (for every two electrons transferred, four hydrogen ions are translocated across the cytoplasmic membrane), and thus conserves the redox energy in a proton gradient. The sequence is that of NAD(P)H-quinone oxidoreductase chain 4 from Prochlorococcus marinus (strain MIT 9515).